The primary structure comprises 99 residues: DNA-binding protein Fis (99 aa).

Residues 1–25 form a disordered region; that stretch reads MFEQKISSEALTTTTSIPATGQITQ. The H-T-H motif DNA-binding region spans 75 to 94; it reads QTRAATMLGINRGTLRKKLK.

The protein belongs to the transcriptional regulatory Fis family. As to quaternary structure, homodimer.

Functionally, activates ribosomal RNA transcription. Plays a direct role in upstream activation of rRNA promoters. In Psychromonas ingrahamii (strain DSM 17664 / CCUG 51855 / 37), this protein is DNA-binding protein Fis.